The primary structure comprises 671 residues: tRNA 5-methylaminomethyl-2-thiouridine biosynthesis bifunctional protein MnmC (671 aa).

The tract at residues 1 to 245 is tRNA (mnm(5)s(2)U34)-methyltransferase; that stretch reads MVNVMNTLSF…KREMLWGEKP (245 aa). The interval 272-671 is FAD-dependent cmnm(5)s(2)U34 oxidoreductase; the sequence is VGGGVASLFV…RKLLKGSKVE (400 aa).

This sequence in the N-terminal section; belongs to the methyltransferase superfamily. tRNA (mnm(5)s(2)U34)-methyltransferase family. The protein in the C-terminal section; belongs to the DAO family. It depends on FAD as a cofactor.

The protein resides in the cytoplasm. It carries out the reaction 5-aminomethyl-2-thiouridine(34) in tRNA + S-adenosyl-L-methionine = 5-methylaminomethyl-2-thiouridine(34) in tRNA + S-adenosyl-L-homocysteine + H(+). In terms of biological role, catalyzes the last two steps in the biosynthesis of 5-methylaminomethyl-2-thiouridine (mnm(5)s(2)U) at the wobble position (U34) in tRNA. Catalyzes the FAD-dependent demodification of cmnm(5)s(2)U34 to nm(5)s(2)U34, followed by the transfer of a methyl group from S-adenosyl-L-methionine to nm(5)s(2)U34, to form mnm(5)s(2)U34. In Actinobacillus pleuropneumoniae serotype 3 (strain JL03), this protein is tRNA 5-methylaminomethyl-2-thiouridine biosynthesis bifunctional protein MnmC.